Reading from the N-terminus, the 179-residue chain is Inner membrane-spanning protein YciB (179 aa).

5 helical membrane-spanning segments follow: residues 22–42 (IYAATSALIVATAIVLIYSWV), 50–70 (MALITFVLVAVFGGLTLFFHN), 76–96 (WKVTVIYALFAGALLMSQWVM), 121–141 (LAWALFFIVCGLANIYIAFWL), and 149–169 (FKVFGLTALTLIFTLLSGVYI).

It belongs to the YciB family.

The protein localises to the cell inner membrane. Plays a role in cell envelope biogenesis, maintenance of cell envelope integrity and membrane homeostasis. This chain is Inner membrane-spanning protein YciB, found in Salmonella arizonae (strain ATCC BAA-731 / CDC346-86 / RSK2980).